A 395-amino-acid polypeptide reads, in one-letter code: Phosphopentomutase (395 aa).

Residues Asp13, Asp288, His293, Asp329, His330, and His341 each contribute to the Mn(2+) site.

It belongs to the phosphopentomutase family. Mn(2+) serves as cofactor.

It localises to the cytoplasm. It carries out the reaction 2-deoxy-alpha-D-ribose 1-phosphate = 2-deoxy-D-ribose 5-phosphate. It catalyses the reaction alpha-D-ribose 1-phosphate = D-ribose 5-phosphate. It functions in the pathway carbohydrate degradation; 2-deoxy-D-ribose 1-phosphate degradation; D-glyceraldehyde 3-phosphate and acetaldehyde from 2-deoxy-alpha-D-ribose 1-phosphate: step 1/2. Functionally, isomerase that catalyzes the conversion of deoxy-ribose 1-phosphate (dRib-1-P) and ribose 1-phosphate (Rib-1-P) to deoxy-ribose 5-phosphate (dRib-5-P) and ribose 5-phosphate (Rib-5-P), respectively. The polypeptide is Phosphopentomutase (Agathobacter rectalis (strain ATCC 33656 / DSM 3377 / JCM 17463 / KCTC 5835 / VPI 0990) (Eubacterium rectale)).